The primary structure comprises 94 residues: C-X-C motif chemokine 11-1 (94 aa).

Positions 1–19 (MKTVTALLLVSLAVVAIEG) are cleaved as a signal peptide. Intrachain disulfides connect Cys27-Cys54 and Cys29-Cys71.

Belongs to the intercrine alpha (chemokine CxC) family.

Its subcellular location is the secreted. In terms of biological role, ligand for cxcr3.2. Chemotactic for macrophages. The chain is C-X-C motif chemokine 11-1 (cxcl11.1) from Danio rerio (Zebrafish).